A 376-amino-acid polypeptide reads, in one-letter code: Chaperone protein DnaJ (376 aa).

In terms of domain architecture, J spans 5 to 70 (DYYEVLGVAK…QKRAAYDQYG (66 aa)). The CR-type zinc-finger motif lies at 136-214 (GYDTQIRVPS…CHGSGKVKET (79 aa)). Zn(2+)-binding residues include Cys149, Cys152, Cys166, Cys169, Cys188, Cys191, Cys202, and Cys205. 4 CXXCXGXG motif repeats span residues 149–156 (CEVCHGSG), 166–173 (CPTCHGQG), 188–195 (CPKCHGTG), and 202–209 (CAHCHGSG).

The protein belongs to the DnaJ family. In terms of assembly, homodimer. The cofactor is Zn(2+).

Its subcellular location is the cytoplasm. Functionally, participates actively in the response to hyperosmotic and heat shock by preventing the aggregation of stress-denatured proteins and by disaggregating proteins, also in an autonomous, DnaK-independent fashion. Unfolded proteins bind initially to DnaJ; upon interaction with the DnaJ-bound protein, DnaK hydrolyzes its bound ATP, resulting in the formation of a stable complex. GrpE releases ADP from DnaK; ATP binding to DnaK triggers the release of the substrate protein, thus completing the reaction cycle. Several rounds of ATP-dependent interactions between DnaJ, DnaK and GrpE are required for fully efficient folding. Also involved, together with DnaK and GrpE, in the DNA replication of plasmids through activation of initiation proteins. This chain is Chaperone protein DnaJ, found in Burkholderia multivorans (strain ATCC 17616 / 249).